We begin with the raw amino-acid sequence, 89 residues long: Otospiralin (89 aa).

The N-terminal stretch at 1-21 (MQPCVLWWLALGLLLGIPAGA) is a signal peptide.

Belongs to the otospiralin family. As to expression, ear specific. Expressed in the cochlea and vestibule, but not in the cochlear nerve, cochlear nucleus, spinal chord, muscle, cerebral cortex, cerebellum, diencephalon and olfactory bulb. In the cochlea, expressed in fibrocytes of the spiral limbus, spiral ligament and suprastrial zone. In the vestibule, expressed in cells located to the stroma below the macular and crista sensory epithelia and in the subepithelial layer of the walls of semicircular canals and maculae.

The protein resides in the secreted. Functionally, may be essential for the survival of the neurosensory epithelium of the inner ear. This Rattus norvegicus (Rat) protein is Otospiralin (Otos).